Here is a 663-residue protein sequence, read N- to C-terminus: Probable methylenetetrahydrofolate reductase (NADPH) (663 aa).

Glu76 (proton donor/acceptor) is an active-site residue. NAD(+)-binding positions include 76 to 81 (EFFPPR) and 107 to 108 (TW). Thr107 is modified (phosphothreonine). FAD-binding positions include 107 to 108 (TW), His141, 171 to 173 (RGD), 187 to 188 (RA), Tyr210, 214 to 217 (HPQA), Asp223, and Lys230. Residue Asp173 coordinates substrate. Residues Gln241, Tyr334, and Arg338 each contribute to the substrate site. A Phosphoserine modification is found at Ser408. Phosphothreonine is present on Thr465. S-adenosyl-L-methionine-binding positions include 477–480 (QPET), 497–501 (TVNSQ), Thr578, and Thr591.

It belongs to the methylenetetrahydrofolate reductase family. Requires FAD as cofactor.

The enzyme catalyses (6S)-5-methyl-5,6,7,8-tetrahydrofolate + NADP(+) = (6R)-5,10-methylene-5,6,7,8-tetrahydrofolate + NADPH + H(+). The protein operates within one-carbon metabolism; tetrahydrofolate interconversion. The polypeptide is Probable methylenetetrahydrofolate reductase (NADPH) (Caenorhabditis elegans).